Consider the following 120-residue polypeptide: UPF0145 protein Bcenmc03_5217 (120 aa).

The protein belongs to the UPF0145 family.

The sequence is that of UPF0145 protein Bcenmc03_5217 from Burkholderia orbicola (strain MC0-3).